A 516-amino-acid chain; its full sequence is uncharacterized protein (516 aa).

Transmembrane regions (helical) follow at residues 183-203, 261-281, 308-328, 329-349, 356-376, 379-399, 430-450, 461-481, and 492-512; these read SAADLPIWEAASGAVLVGDGV, VLKTTFGFLAFGLIVSATYII, VMNGFLACLVMLATGIGTALL, LDHQFALVASVYLALTLAYSF, LLDVTVIGALFTLRIVMGQVL, LAFSPWLFSFSVMFFISLALA, LGHGLASASASIVIMLLFLAL, PAWLYVAPLGVSIWLQRIWLL, and IVFALNDKTSWFIGALIASAF.

Its subcellular location is the cell membrane. Its function is as follows. Possible permease/transporter. This is an uncharacterized protein from Sinorhizobium fredii (strain NBRC 101917 / NGR234).